The chain runs to 399 residues: ATP-dependent RNA helicase fal1 (399 aa).

A Q motif motif is present at residues 25–53; that stretch reads PTFEDMHLKESLLRGIYAYGYESPSAVQS. Residues 56-226 form the Helicase ATP-binding domain; that stretch reads IVQICKGRDT…TKFMTDPVRV (171 aa). ATP is bound at residue 69–76; it reads AQSGTGKT. Residues 174–177 carry the DEAD box motif; the sequence is DEAD. The region spanning 237–398 is the Helicase C-terminal domain; sequence GIKQYFIAVE…EMPMNVADLL (162 aa).

This sequence belongs to the DEAD box helicase family. DDX48/FAL1 subfamily.

Its subcellular location is the nucleus. The protein resides in the nucleolus. It carries out the reaction ATP + H2O = ADP + phosphate + H(+). Functionally, ATP-dependent RNA helicase involved in 40S ribosomal subunit biogenesis. Required for the processing and cleavage of 35S pre-rRNA at sites A0, A1, and A2, leading to mature 18S rRNA. The chain is ATP-dependent RNA helicase fal1 (fal1) from Aspergillus clavatus (strain ATCC 1007 / CBS 513.65 / DSM 816 / NCTC 3887 / NRRL 1 / QM 1276 / 107).